A 252-amino-acid polypeptide reads, in one-letter code: Probable endonuclease 4 (252 aa).

Zn(2+)-binding residues include His56, His96, Glu129, Asp162, His165, His191, Asp204, His206, and Glu233.

This sequence belongs to the AP endonuclease 2 family. Zn(2+) is required as a cofactor.

The catalysed reaction is Endonucleolytic cleavage to 5'-phosphooligonucleotide end-products.. In terms of biological role, endonuclease IV plays a role in DNA repair. It cleaves phosphodiester bonds at apurinic or apyrimidinic (AP) sites, generating a 3'-hydroxyl group and a 5'-terminal sugar phosphate. This is Probable endonuclease 4 from Mycobacterium ulcerans (strain Agy99).